Consider the following 78-residue polypeptide: UPF0369 protein RP167 (78 aa).

This sequence belongs to the SDHAF4 family.

In Rickettsia prowazekii (strain Madrid E), this protein is UPF0369 protein RP167.